The following is a 671-amino-acid chain: DNA ligase (671 aa).

Residues 32–36 (DAEYD), 81–82 (SL), and Glu113 contribute to the NAD(+) site. Lys115 acts as the N6-AMP-lysine intermediate in catalysis. Positions 136, 173, 290, and 314 each coordinate NAD(+). Zn(2+)-binding residues include Cys408, Cys411, Cys426, and Cys432. The region spanning 593–671 (EIDSPFAGKT…EAEMIRLLGA (79 aa)) is the BRCT domain.

Belongs to the NAD-dependent DNA ligase family. LigA subfamily. The cofactor is Mg(2+). Requires Mn(2+) as cofactor.

It carries out the reaction NAD(+) + (deoxyribonucleotide)n-3'-hydroxyl + 5'-phospho-(deoxyribonucleotide)m = (deoxyribonucleotide)n+m + AMP + beta-nicotinamide D-nucleotide.. In terms of biological role, DNA ligase that catalyzes the formation of phosphodiester linkages between 5'-phosphoryl and 3'-hydroxyl groups in double-stranded DNA using NAD as a coenzyme and as the energy source for the reaction. It is essential for DNA replication and repair of damaged DNA. The protein is DNA ligase of Salmonella paratyphi B (strain ATCC BAA-1250 / SPB7).